The chain runs to 181 residues: Protein Syd (181 aa).

The protein belongs to the Syd family.

The protein resides in the cell inner membrane. Its function is as follows. Interacts with the SecY protein in vivo. May bind preferentially to an uncomplexed state of SecY, thus functioning either as a chelating agent for excess SecY in the cell or as a regulatory factor that negatively controls the translocase function. This Escherichia coli O17:K52:H18 (strain UMN026 / ExPEC) protein is Protein Syd.